The following is a 378-amino-acid chain: 3-dehydroquinate synthase (378 aa).

NAD(+) contacts are provided by residues 115–119, 139–140, Lys-152, and Lys-161; these read GVVGD and TS. The Zn(2+) site is built by Glu-194, His-256, and His-275.

Belongs to the sugar phosphate cyclases superfamily. Dehydroquinate synthase family. It depends on Co(2+) as a cofactor. Requires Zn(2+) as cofactor. The cofactor is NAD(+).

The protein localises to the cytoplasm. The catalysed reaction is 7-phospho-2-dehydro-3-deoxy-D-arabino-heptonate = 3-dehydroquinate + phosphate. It functions in the pathway metabolic intermediate biosynthesis; chorismate biosynthesis; chorismate from D-erythrose 4-phosphate and phosphoenolpyruvate: step 2/7. Its function is as follows. Catalyzes the conversion of 3-deoxy-D-arabino-heptulosonate 7-phosphate (DAHP) to dehydroquinate (DHQ). This chain is 3-dehydroquinate synthase, found in Brucella suis (strain ATCC 23445 / NCTC 10510).